The chain runs to 127 residues: Single-stranded DNA-binding protein 2 (127 aa).

The SSB domain maps to 4 to 103 (INKVMLVGRC…ITINTIELLG (100 aa)). The interval 104-127 (SPRKEESTSTSAPNETQAVANANF) is disordered. The segment covering 111-127 (TSTSAPNETQAVANANF) has biased composition (polar residues).

Homotetramer.

The protein is Single-stranded DNA-binding protein 2 (ssb2) of Nostoc sp. (strain PCC 7120 / SAG 25.82 / UTEX 2576).